Reading from the N-terminus, the 434-residue chain is MANFDLTRINCQYLDRHLTFPLLEFLCGKEIYNQQELLEYILETVNKTNMIDYTMDTRKRLNLSQEMPDELVQRKAEVLATLKQLQNEVAPIMKATDILKNGESMKDSKTFVNALQKDYNFKVEHLESAYKLAKYLYECGNYQESTSYLYFCLIVMSPNDKNYLNVLWGKLAAEILTLNWNTALEDLTRLRDYIDSANFSTIQALQQRTWLIHWSVLVFFNHPKGRDLIIEMFLYKPLYLNAIQTMCPHIMRYLATAVVINRTRRNALKDLIKVIQQESYTYRDPITEFLECLYVNFDFEGARLKLHECQTVILNDFFIVACLNEFVEDARLMIFETFCRIHQCITISMLADKLNMKPNEAECWIVNLIRNARLNAKIDSKLGHVVMGTQPLSPYQQLVEKIDSLSMRSEHLAGLIERKSKQNNKESIDSWKYY.

In terms of domain architecture, PCI spans 219–392; the sequence is FFNHPKGRDL…GHVVMGTQPL (174 aa).

This sequence belongs to the eIF-3 subunit E family. Component of the eukaryotic translation initiation factor 3 (eIF-3) complex. The eIF-3 complex interacts with pix. Interacts with mxt.

It is found in the cytoplasm. Its function is as follows. Component of the eukaryotic translation initiation factor 3 (eIF-3) complex, which is involved in protein synthesis of a specialized repertoire of mRNAs and, together with other initiation factors, stimulates binding of mRNA and methionyl-tRNAi to the 40S ribosome. The eIF-3 complex specifically targets and initiates translation of a subset of mRNAs involved in cell proliferation. This is Eukaryotic translation initiation factor 3 subunit E (eIF3-S6) from Drosophila pseudoobscura pseudoobscura (Fruit fly).